The following is a 290-amino-acid chain: 4-hydroxybenzoate octaprenyltransferase (290 aa).

A run of 6 helical transmembrane segments spans residues 41 to 61 (WPLL…GCAM), 89 to 109 (WEAV…IQPL), 133 to 153 (FFAI…PMAF), 158 to 178 (DTVP…SVAY), 202 to 224 (FGRF…YVWI), and 269 to 289 (WLGG…GTAG).

It belongs to the UbiA prenyltransferase family. It depends on Mg(2+) as a cofactor.

It localises to the cell inner membrane. The catalysed reaction is all-trans-octaprenyl diphosphate + 4-hydroxybenzoate = 4-hydroxy-3-(all-trans-octaprenyl)benzoate + diphosphate. The protein operates within cofactor biosynthesis; ubiquinone biosynthesis. Its function is as follows. Catalyzes the prenylation of para-hydroxybenzoate (PHB) with an all-trans polyprenyl group. Mediates the second step in the final reaction sequence of ubiquinone-8 (UQ-8) biosynthesis, which is the condensation of the polyisoprenoid side chain with PHB, generating the first membrane-bound Q intermediate 3-octaprenyl-4-hydroxybenzoate. The polypeptide is 4-hydroxybenzoate octaprenyltransferase (Burkholderia ambifaria (strain MC40-6)).